Consider the following 516-residue polypeptide: MGRKKIQITRIMDERNRQVTFTKRKFGLMKKAYELSVLCDCEIALIIFNSSNKLFQYASTDMDKVLLKYTEYNEPHESRTNSDIVETLRKKGLNGCESPDDQRYFEEETFSKLIEDSDFVFKRDPALNKKENRGCDSPDPDGSYVLTPHTEEKYKKINEEFDNMMRSHKISPGLPQQTFPMSVTVPVSNPNTLPYSSPGNTMVTASLAASASLTDARMLSPPPTTLHRNVVSPGLPQRPPSTGNAGVMLCSSDLSVPNGAGTSPVGNGFVNPRASPSHLGPTGGNVLGKVMPTKSPPPPGGNLVMNSRKPDLRVVIPPSSKGMMPPLNTQRVTSSQGTQPLATPIVSVATPSLAPQGLIYSAMPTAYNTDYPLTSADLSMLQGFNSPGILPLGQVSAWQQHHVGQAALSSFVATGQLSQGSNLSINTNQNINIKSEPISPPRDRITPSGFQSHQHHQHQPRPEMDSLSSSSSSYDGSDREDVRNDFHSPIGLGRPANNEDRDSPSVKRMRMDAWVT.

An interaction with hdac9 region spans residues 1-100 (MGRKKIQITR…KGLNGCESPD (100 aa)). The MADS-box domain maps to 3-57 (RKKIQITRIMDERNRQVTFTKRKFGLMKKAYELSVLCDCEIALIIFNSSNKLFQY). The segment at residues 58-86 (ASTDMDKVLLKYTEYNEPHESRTNSDIVE) is a DNA-binding region (mef2-type). The tract at residues 318–339 (PSSKGMMPPLNTQRVTSSQGTQ) is disordered. A compositionally biased stretch (polar residues) spans 327 to 339 (LNTQRVTSSQGTQ). Thr343 bears the Phosphothreonine; by NLK mark. The residue at position 386 (Ser386) is a Phosphoserine; by NLK. Polar residues predominate over residues 420–433 (GSNLSINTNQNINI). Residues 420–516 (GSNLSINTNQ…KRMRMDAWVT (97 aa)) are disordered. Over residues 465-475 (DSLSSSSSSYD) the composition is skewed to low complexity. 2 stretches are compositionally biased toward basic and acidic residues: residues 476 to 486 (GSDREDVRNDF) and 497 to 516 (NNEDRDSPSVKRMRMDAWVT).

This sequence belongs to the MEF2 family. Interacts with hdac9 and nlk2. In terms of tissue distribution, restricted to the somitic mesoderm of early embryos. Expressed in the head region of neurula stage embryos and in body muscle (myotomes) of the tadpole. Expressed in all tissues examined in the adult.

It localises to the nucleus. In terms of biological role, may regulate muscle-specific transcription in the embryo and may regulate transcription of a variety of cell types in the adult. Binds to the sequence 5'-CTA[TA]4TAR-3'. Acts downstream of nlk2 in anterior neural development, including eye formation. In Xenopus laevis (African clawed frog), this protein is Myocyte-specific enhancer factor 2A homolog (mef2a).